The primary structure comprises 275 residues: Beta-lactamase OXA-2 (275 aa).

The N-terminal stretch at 1–21 (MAIRIFAILFSIFSLATFAHA) is a signal peptide. Serine 72 functions as the Acyl-ester intermediate in the catalytic mechanism. N6-carboxylysine is present on lysine 75. 210-212 (KTG) is a substrate binding site.

The protein belongs to the class-D beta-lactamase family.

It catalyses the reaction a beta-lactam + H2O = a substituted beta-amino acid. In terms of biological role, this is an oxacillin-hydrolyzing beta-lactamase. The protein is Beta-lactamase OXA-2 (bla) of Escherichia coli.